The primary structure comprises 255 residues: tRNA (guanine-N(7)-)-methyltransferase (255 aa).

The interval 1–30 (MMHDDPNEAGLPPDDAALPDEAADGADEVN) is disordered. The span at 17 to 27 (ALPDEAADGAD) shows a compositional bias: acidic residues. S-adenosyl-L-methionine contacts are provided by glutamate 86, glutamate 111, aspartate 138, and aspartate 161. Residue aspartate 161 is part of the active site. Substrate contacts are provided by residues lysine 165, aspartate 197, and 232-235 (TKFE).

This sequence belongs to the class I-like SAM-binding methyltransferase superfamily. TrmB family.

It carries out the reaction guanosine(46) in tRNA + S-adenosyl-L-methionine = N(7)-methylguanosine(46) in tRNA + S-adenosyl-L-homocysteine. It participates in tRNA modification; N(7)-methylguanine-tRNA biosynthesis. Its function is as follows. Catalyzes the formation of N(7)-methylguanine at position 46 (m7G46) in tRNA. The polypeptide is tRNA (guanine-N(7)-)-methyltransferase (Burkholderia vietnamiensis (strain G4 / LMG 22486) (Burkholderia cepacia (strain R1808))).